The chain runs to 613 residues: Spastin (613 aa).

Positions 1 to 42 are disordered; the sequence is MNSPGGRGKKKGSAGSSSAPPAAGASPSAPSGPAPPAPPAGA. Topologically, residues 1–61 are cytoplasmic; sequence MNSPGGRGKK…KRNLYYFSYP (61 aa). A compositionally biased stretch (low complexity) spans 13–29; sequence SAGSSSAPPAAGASPSA. The span at 30–39 shows a compositional bias: pro residues; sequence PSGPAPPAPP. The segment at residues 62–82 is an intramembrane region (helical); the sequence is LFAAFALLRFVAFQLGLLVAW. Residues 83-613 are Cytoplasmic-facing; the sequence is LCERLSRGAL…WNKDFGDTTV (531 aa). An MIT domain is found at 117 to 192; sequence HKRAFECISM…AMAKDRLQLL (76 aa). A disordered region spans residues 224-312; sequence SESGAVPKKK…PAARKKKDTK (89 aa). 3 stretches are compositionally biased toward polar residues: residues 237–257, 264–274, and 281–299; these read THTS…STGL, PSYSGISTASV, and PATS…NKPS. An ATP-binding site is contributed by 379-386; sequence GPPGNGKT.

This sequence belongs to the AAA ATPase family. Spastin subfamily. As to quaternary structure, homohexamer. The homohexamer is stabilized by ATP-binding. The homohexamer may adopt a ring conformation through which microtubules pass prior to being severed. Interacts with microtubules.

The protein localises to the membrane. Its subcellular location is the cytoplasm. It localises to the cytoskeleton. The protein resides in the microtubule organizing center. It is found in the centrosome. The protein localises to the perinuclear region. Its subcellular location is the nucleus. It catalyses the reaction n ATP + n H2O + a microtubule = n ADP + n phosphate + (n+1) alpha/beta tubulin heterodimers.. Its function is as follows. ATP-dependent microtubule severing protein that specifically recognizes and cuts microtubules that are polyglutamylated. Preferentially recognizes and acts on microtubules decorated with short polyglutamate tails: severing activity increases as the number of glutamates per tubulin rises from one to eight, but decreases beyond this glutamylation threshold. Microtubule severing promotes reorganization of cellular microtubule arrays and the release of microtubules from the centrosome following nucleation. Required for membrane traffic from the endoplasmic reticulum (ER) to the Golgi and for completion of the abscission stage of cytokinesis. Also plays a role in axon growth and the formation of axonal branches. The protein is Spastin of Gallus gallus (Chicken).